The primary structure comprises 237 residues: Ribitol-5-phosphate cytidylyltransferase (237 aa).

CTP-binding positions include 7–10 (LAGG) and 80–86 (GEDRNET).

The protein belongs to the IspD/TarI cytidylyltransferase family. TarI subfamily.

It catalyses the reaction D-ribitol 5-phosphate + CTP + H(+) = CDP-L-ribitol + diphosphate. The protein operates within cell wall biogenesis; poly(ribitol phosphate) teichoic acid biosynthesis. Its function is as follows. Catalyzes the transfer of the cytidylyl group of CTP to D-ribitol 5-phosphate. This chain is Ribitol-5-phosphate cytidylyltransferase, found in Listeria innocua serovar 6a (strain ATCC BAA-680 / CLIP 11262).